We begin with the raw amino-acid sequence, 110 residues long: Large ribosomal subunit protein uL22 (110 aa).

This sequence belongs to the universal ribosomal protein uL22 family. Part of the 50S ribosomal subunit.

Functionally, this protein binds specifically to 23S rRNA; its binding is stimulated by other ribosomal proteins, e.g. L4, L17, and L20. It is important during the early stages of 50S assembly. It makes multiple contacts with different domains of the 23S rRNA in the assembled 50S subunit and ribosome. Its function is as follows. The globular domain of the protein is located near the polypeptide exit tunnel on the outside of the subunit, while an extended beta-hairpin is found that lines the wall of the exit tunnel in the center of the 70S ribosome. This is Large ribosomal subunit protein uL22 from Acidovorax ebreus (strain TPSY) (Diaphorobacter sp. (strain TPSY)).